Reading from the N-terminus, the 399-residue chain is Lysosomal acid lipase/cholesteryl ester hydrolase (399 aa).

The first 27 residues, 1–27 (MKMRFLGLVVCLVLWTLHSEGSGGKLT), serve as a signal peptide directing secretion. Residues 28–76 (AVDPETNMNVSEIISYWGFPSEEYLVETEDGYILCLNRIPHGRKNHSDK) constitute a propeptide, removed in mature form. Asn36, Asn72, Asn101, and Asn161 each carry an N-linked (GlcNAc...) asparagine glycan. The AB hydrolase-1 domain maps to 80-380 (PVVFLQHGLL…EWEHLDFIWG (301 aa)). The active-site Charge relay system is Ser174. Asn273 and Asn321 each carry an N-linked (GlcNAc...) asparagine glycan. The active-site Charge relay system is the His374.

Belongs to the AB hydrolase superfamily. Lipase family. In terms of assembly, monomer. Glycosylation is not essential for catalytic activity. In terms of tissue distribution, most abundantly expressed in brain, lung, kidney and mammary gland, a moderate expression seen in placenta and expressed at low levels in the liver and heart.

Its subcellular location is the lysosome. The enzyme catalyses a sterol ester + H2O = a sterol + a fatty acid + H(+). It carries out the reaction cholesteryl (9Z-octadecenoate) + H2O = cholesterol + (9Z)-octadecenoate + H(+). The catalysed reaction is a triacylglycerol + H2O = a 1,2-diacylglycerol + a fatty acid + H(+). It catalyses the reaction 1,2-di-(9Z-octadecenoyl)-glycerol + (9Z)-octadecenoate + H(+) = 1,2,3-tri-(9Z-octadecenoyl)-glycerol + H2O. The enzyme catalyses a 1,2-diacylglycerol + H2O = a 1-acylglycerol + a fatty acid + H(+). It carries out the reaction 1,2-di-(9Z-octadecenoyl)-glycerol + H2O = 1-(9Z-octadecenoyl)-glycerol + (9Z)-octadecenoate + H(+). The catalysed reaction is a 1,3-diacylglycerol + H2O = a 1-acylglycerol + a fatty acid + H(+). It catalyses the reaction 1,3-di-(9Z-octadecenoyl)-glycerol + H2O = 1-(9Z-octadecenoyl)-glycerol + (9Z)-octadecenoate + H(+). Catalyzes the deacylation of cholesteryl ester core lipids of endocytosed low density lipoproteins to generate free fatty acids and cholesterol. Hydrolyzes triglycerides (1,2,3-triacylglycerol) and diglycerides (such as 1,2-diacylglycerol and 1,3-diacylglycerol) with preference for the acyl moieties at the sn-1 or sn-3 positions. This Homo sapiens (Human) protein is Lysosomal acid lipase/cholesteryl ester hydrolase (LIPA).